A 227-amino-acid chain; its full sequence is Cytochrome c oxidase subunit 2 (227 aa).

Topologically, residues methionine 1–serine 14 are mitochondrial intermembrane. A helical transmembrane segment spans residues proline 15–methionine 45. The Mitochondrial matrix portion of the chain corresponds to leucine 46–glutamine 59. Residues glutamate 60–methionine 87 form a helical membrane-spanning segment. The Mitochondrial intermembrane portion of the chain corresponds to aspartate 88–isoleucine 227. Cu cation contacts are provided by histidine 161, cysteine 196, glutamate 198, cysteine 200, histidine 204, and methionine 207. Glutamate 198 serves as a coordination point for Mg(2+). Residue tyrosine 218 is modified to Phosphotyrosine.

It belongs to the cytochrome c oxidase subunit 2 family. As to quaternary structure, component of the cytochrome c oxidase (complex IV, CIV), a multisubunit enzyme composed of 14 subunits. The complex is composed of a catalytic core of 3 subunits MT-CO1, MT-CO2 and MT-CO3, encoded in the mitochondrial DNA, and 11 supernumerary subunits COX4I, COX5A, COX5B, COX6A, COX6B, COX6C, COX7A, COX7B, COX7C, COX8 and NDUFA4, which are encoded in the nuclear genome. The complex exists as a monomer or a dimer and forms supercomplexes (SCs) in the inner mitochondrial membrane with NADH-ubiquinone oxidoreductase (complex I, CI) and ubiquinol-cytochrome c oxidoreductase (cytochrome b-c1 complex, complex III, CIII), resulting in different assemblies (supercomplex SCI(1)III(2)IV(1) and megacomplex MCI(2)III(2)IV(2)). Found in a complex with TMEM177, COA6, COX18, COX20, SCO1 and SCO2. Interacts with TMEM177 in a COX20-dependent manner. Interacts with COX20. Interacts with COX16. Cu cation is required as a cofactor.

The protein resides in the mitochondrion inner membrane. The enzyme catalyses 4 Fe(II)-[cytochrome c] + O2 + 8 H(+)(in) = 4 Fe(III)-[cytochrome c] + 2 H2O + 4 H(+)(out). Component of the cytochrome c oxidase, the last enzyme in the mitochondrial electron transport chain which drives oxidative phosphorylation. The respiratory chain contains 3 multisubunit complexes succinate dehydrogenase (complex II, CII), ubiquinol-cytochrome c oxidoreductase (cytochrome b-c1 complex, complex III, CIII) and cytochrome c oxidase (complex IV, CIV), that cooperate to transfer electrons derived from NADH and succinate to molecular oxygen, creating an electrochemical gradient over the inner membrane that drives transmembrane transport and the ATP synthase. Cytochrome c oxidase is the component of the respiratory chain that catalyzes the reduction of oxygen to water. Electrons originating from reduced cytochrome c in the intermembrane space (IMS) are transferred via the dinuclear copper A center (CU(A)) of subunit 2 and heme A of subunit 1 to the active site in subunit 1, a binuclear center (BNC) formed by heme A3 and copper B (CU(B)). The BNC reduces molecular oxygen to 2 water molecules using 4 electrons from cytochrome c in the IMS and 4 protons from the mitochondrial matrix. The protein is Cytochrome c oxidase subunit 2 (MT-CO2) of Conilurus penicillatus (Brush-tailed rabbit-rat).